The primary structure comprises 485 residues: Ras-like GTPase YcjX (485 aa).

The short motif at 33 to 40 is the Walker A motif element; the sequence is GLSGAGKT. Residues serine 35, glycine 36, glycine 38, lysine 39, threonine 40, alanine 41, tryptophan 110, serine 113, threonine 114, arginine 115, lysine 355, aspartate 357, and histidine 358 each coordinate GTP. GDP-binding residues include glycine 36, glycine 38, lysine 39, threonine 40, alanine 41, tryptophan 110, serine 113, and threonine 114. Lysine 355, aspartate 357, histidine 358, serine 395, alanine 396, and isoleucine 397 together coordinate GDP. Isoleucine 397 contacts GTP.

As to quaternary structure, monomer in solution. It depends on Mg(2+) as a cofactor.

It carries out the reaction GTP + H2O = GDP + phosphate + H(+). With respect to regulation, alternates between an inactive form bound to GDP and an active form bound to GTP. Likely activated by a guanine nucleotide-exchange factor (GEF). In terms of biological role, binds GTP and GDP. Has intrinsic GTPase activity. Does not hydrolyze ATP. May act as a transducer of stress responses. This is Ras-like GTPase YcjX from Shewanella oneidensis (strain ATCC 700550 / JCM 31522 / CIP 106686 / LMG 19005 / NCIMB 14063 / MR-1).